A 78-amino-acid polypeptide reads, in one-letter code: Protein SlyX homolog (78 aa).

It belongs to the SlyX family.

This is Protein SlyX homolog from Xanthomonas axonopodis pv. citri (strain 306).